The sequence spans 222 residues: Large ribosomal subunit protein uL1 (222 aa).

This sequence belongs to the universal ribosomal protein uL1 family. Part of the 50S ribosomal subunit.

Binds directly to 23S rRNA. Probably involved in E site tRNA release. Functionally, protein L1 is also a translational repressor protein, it controls the translation of its operon by binding to its mRNA. This chain is Large ribosomal subunit protein uL1, found in Pyrobaculum arsenaticum (strain DSM 13514 / JCM 11321 / PZ6).